The following is a 120-amino-acid chain: Large ribosomal subunit protein uL18 (120 aa).

Residues 1-24 (MITKAAKNATRKKRHARVRAKLTG) form a disordered region. The segment covering 9 to 20 (ATRKKRHARVRA) has biased composition (basic residues).

This sequence belongs to the universal ribosomal protein uL18 family. In terms of assembly, part of the 50S ribosomal subunit; part of the 5S rRNA/L5/L18/L25 subcomplex. Contacts the 5S and 23S rRNAs.

This is one of the proteins that bind and probably mediate the attachment of the 5S RNA into the large ribosomal subunit, where it forms part of the central protuberance. The protein is Large ribosomal subunit protein uL18 of Bacillus mycoides (strain KBAB4) (Bacillus weihenstephanensis).